The sequence spans 642 residues: Uromodulin (642 aa).

Positions methionine 1–isoleucine 26 are cleaved as a signal peptide. An EGF-like 1 domain is found at arginine 32–glutamate 64. Disulfide bonds link cysteine 34/cysteine 43, cysteine 37/cysteine 52, cysteine 54/cysteine 65, cysteine 71/cysteine 85, cysteine 79/cysteine 94, cysteine 96/cysteine 108, cysteine 114/cysteine 128, cysteine 122/cysteine 137, cysteine 139/cysteine 150, cysteine 152/cysteine 163, cysteine 157/cysteine 172, cysteine 176/cysteine 269, cysteine 197/cysteine 284, cysteine 219/cysteine 257, cysteine 225/cysteine 289, cysteine 250/cysteine 258, cysteine 299/cysteine 308, cysteine 302/cysteine 317, cysteine 319/cysteine 348, cysteine 336/cysteine 426, and cysteine 367/cysteine 390. An N-linked (GlcNAc...) asparagine glycan is attached at asparagine 40. One can recognise an EGF-like 2; calcium-binding domain in the interval aspartate 67–isoleucine 109. N-linked (GlcNAc...) asparagine glycosylation is present at asparagine 78. The EGF-like 3; calcium-binding domain maps to aspartate 110–glutamate 151. A glycan (N-linked (GlcNAc...) asparagine) is linked at asparagine 134. Residues cysteine 152–alanine 173 are beta hairpin. Residues aspartate 174–threonine 293 are D10C. 2 N-linked (GlcNAc...) asparagine glycosylation sites follow: asparagine 234 and asparagine 246. A glycan (N-linked (GlcNAc...) asparagine) is linked at asparagine 277. Residues serine 294 to valine 325 form the EGF-like 4 domain. N-linked (GlcNAc...) asparagine glycosylation occurs at asparagine 324. A ZP-N region spans residues glutamate 335–leucine 430. A ZP domain is found at glutamate 335 to serine 590. Asparagine 397 and asparagine 448 each carry an N-linked (GlcNAc...) asparagine glycan. Residues aspartate 431–threonine 454 are flexible ZP-N/ZP-C linker; important for secretion and polymerization into filaments. The interval glycine 455–glutamine 465 is internal hydrophobic patch (IHP). Positions glycine 455–serine 590 are ZP-C. Intrachain disulfides connect cysteine 507–cysteine 567, cysteine 528–cysteine 583, and cysteine 572–cysteine 579. Residue asparagine 514 is glycosylated (N-linked (GlcNAc...) asparagine). The essential for cleavage by HPN stretch occupies residues arginine 587–serine 590. Residues valine 599–arginine 607 form an external hydrophobic patch (EHP); regulates polymerization into filaments region. The GPI-anchor amidated serine moiety is linked to residue serine 620. Positions serine 621 to glutamine 642 are cleaved as a propeptide — removed in mature form.

As to quaternary structure, homodimer that then polymerizes into long filaments. The filaments can additionally assemble laterally to form a sheet. The filaments consist of a zigzag-shaped backbone with laterally protruding arms which interact with bacterial adhesin fimH. Two fimH molecules can bind to a single UMOD monomer. Post-translationally, N-glycosylated. In terms of processing, proteolytically cleaved at a conserved C-terminal proteolytic cleavage site to generate the secreted form found in urine. This cleavage is catalyzed by HPN. As to expression, detected in kidney and pancreas.

Its subcellular location is the apical cell membrane. It localises to the basolateral cell membrane. The protein resides in the cell projection. The protein localises to the cilium membrane. It is found in the secreted. Its function is as follows. Functions in biogenesis and organization of the apical membrane of epithelial cells of the thick ascending limb of Henle's loop (TALH), where it promotes formation of complex filamentous gel-like structure that may play a role in the water barrier permeability. May serve as a receptor for binding and endocytosis of cytokines (IL-1, IL-2) and TNF. Facilitates neutrophil migration across renal epithelia. Functionally, in the urine, may contribute to colloid osmotic pressure, retards passage of positively charged electrolytes, and inhibits formation of liquid containing supersaturated salts and subsequent formation of salt crystals. Protects against urinary tract infections by binding to type 1 fimbriated E.coli. Binds to bacterial adhesin fimH which mediates the stable formation of bacterial aggregates, prevents the binding of E.coli to uroplakins UPK1A and UPK1B which act as urothelial receptors for type I fimbriae, and allows for pathogen clearance through micturation. Also promotes aggregation of other bacteria including K.pneumoniae, P.aeruginosa and S.mitis and so may also protect against other uropathogens. The polypeptide is Uromodulin (UMOD) (Canis lupus familiaris (Dog)).